The chain runs to 522 residues: uncharacterized protein (522 aa).

A compositionally biased stretch (low complexity) spans 1-11; that stretch reads MSSITSRVSSR. The segment at 1–20 is disordered; that stretch reads MSSITSRVSSRSSHELTEKK. 12 consecutive transmembrane segments (helical) span residues 69-89, 116-136, 141-161, 173-193, 204-224, 236-256, 303-323, 338-358, 367-387, 396-416, 428-448, and 462-482; these read VLWKIDLVMMPVMCITYMIQY, SMTTLFYAGYLVAQYPAAILM, LSYFIFCNVFLWSAMVCLMAA, FLAGIFEASITPAFINITAMW, LCWYAFNGIAQIIGSILSYGL, YVFIVIGLMSLGWGVVFVFIP, VIMITLFTGVCMITNGIGVFS, AVLNMPLGAIEVAAMFISGVL, LLIGVFMNCLTLAGCLMIWKI, LVGVWFTMWVPASSALLLSLI, VTSATVFVFYSVGNIVSPQLF, and AMIVSLCIIIAIAFVLTGYYI.

This sequence belongs to the major facilitator superfamily. Allantoate permease family.

The protein localises to the endoplasmic reticulum. Its subcellular location is the membrane. This is an uncharacterized protein from Schizosaccharomyces pombe (strain 972 / ATCC 24843) (Fission yeast).